We begin with the raw amino-acid sequence, 81 residues long: Large ribosomal subunit protein bL27 (81 aa).

A disordered region spans residues 1-22 (MAHKKGQGSSRNGRDSNAQRRG).

This sequence belongs to the bacterial ribosomal protein bL27 family.

The polypeptide is Large ribosomal subunit protein bL27 (Rhodopirellula baltica (strain DSM 10527 / NCIMB 13988 / SH1)).